The sequence spans 140 residues: Immunity protein RhsIC (140 aa).

Its function is as follows. Putative immunity protein component of a toxin-immunity protein module, which may function as a cellular contact-dependent growth inhibition (CDI) system. Blocks the toxic effects of expression of the C-terminus (residues 1519-1658) of cognate toxin RhsC in E.coli. The sequence is that of Immunity protein RhsIC (rhsIC) from Dickeya dadantii (strain 3937) (Erwinia chrysanthemi (strain 3937)).